Reading from the N-terminus, the 311-residue chain is Aspartate carbamoyltransferase catalytic subunit (311 aa).

2 residues coordinate carbamoyl phosphate: R55 and T56. K85 is an L-aspartate binding site. Residues R106, H135, and Q138 each contribute to the carbamoyl phosphate site. L-aspartate-binding residues include R168 and R230. Positions 268 and 269 each coordinate carbamoyl phosphate.

This sequence belongs to the aspartate/ornithine carbamoyltransferase superfamily. ATCase family. Heterododecamer (2C3:3R2) of six catalytic PyrB chains organized as two trimers (C3), and six regulatory PyrI chains organized as three dimers (R2).

The enzyme catalyses carbamoyl phosphate + L-aspartate = N-carbamoyl-L-aspartate + phosphate + H(+). Its pathway is pyrimidine metabolism; UMP biosynthesis via de novo pathway; (S)-dihydroorotate from bicarbonate: step 2/3. Functionally, catalyzes the condensation of carbamoyl phosphate and aspartate to form carbamoyl aspartate and inorganic phosphate, the committed step in the de novo pyrimidine nucleotide biosynthesis pathway. In Escherichia coli (strain 55989 / EAEC), this protein is Aspartate carbamoyltransferase catalytic subunit.